A 734-amino-acid polypeptide reads, in one-letter code: Photosystem I P700 chlorophyll a apoprotein A2 (734 aa).

The next 8 helical transmembrane spans lie at Ile46–Ala69, Leu135–Gln158, Leu175–Ile199, Met273–Tyr291, Ile330–Tyr353, Ala369–Ile395, Ala417–His439, and Phe517–Val535. Positions 559 and 568 each coordinate [4Fe-4S] cluster. Helical transmembrane passes span Ala575–Trp596 and Leu643–Ile665. His654, Met662, and Tyr670 together coordinate chlorophyll a. Trp671 provides a ligand contact to phylloquinone. A helical transmembrane segment spans residues Leu707–Ala727.

It belongs to the PsaA/PsaB family. The PsaA/B heterodimer binds the P700 chlorophyll special pair and subsequent electron acceptors. PSI consists of a core antenna complex that captures photons, and an electron transfer chain that converts photonic excitation into a charge separation. The eukaryotic PSI reaction center is composed of at least 11 subunits. It depends on P700 is a chlorophyll a/chlorophyll a' dimer, A0 is one or more chlorophyll a, A1 is one or both phylloquinones and FX is a shared 4Fe-4S iron-sulfur center. as a cofactor.

The protein localises to the plastid. The protein resides in the chloroplast thylakoid membrane. The catalysed reaction is reduced [plastocyanin] + hnu + oxidized [2Fe-2S]-[ferredoxin] = oxidized [plastocyanin] + reduced [2Fe-2S]-[ferredoxin]. Its function is as follows. PsaA and PsaB bind P700, the primary electron donor of photosystem I (PSI), as well as the electron acceptors A0, A1 and FX. PSI is a plastocyanin-ferredoxin oxidoreductase, converting photonic excitation into a charge separation, which transfers an electron from the donor P700 chlorophyll pair to the spectroscopically characterized acceptors A0, A1, FX, FA and FB in turn. Oxidized P700 is reduced on the lumenal side of the thylakoid membrane by plastocyanin. The sequence is that of Photosystem I P700 chlorophyll a apoprotein A2 from Lepidium virginicum (Virginia pepperweed).